A 409-amino-acid polypeptide reads, in one-letter code: L-cysteine:1D-myo-inositol 2-amino-2-deoxy-alpha-D-glucopyranoside ligase (409 aa).

Cysteine 25 is a Zn(2+) binding site. L-cysteinyl-5'-AMP-binding positions include 25-28 (CGIT), threonine 40, and 63-65 (NVT). The 'HIGH' region motif lies at 27–37 (ITPYDATHIGH). A 'ERGGDP' region motif is present at residues 179–184 (ERGGDP). Residue tryptophan 219 coordinates L-cysteinyl-5'-AMP. Residue cysteine 223 participates in Zn(2+) binding. 241 to 243 (GSD) serves as a coordination point for L-cysteinyl-5'-AMP. Residue histidine 248 coordinates Zn(2+). Valine 274 provides a ligand contact to L-cysteinyl-5'-AMP. Residues 280–284 (KMSKS) carry the 'KMSKS' region motif.

The protein belongs to the class-I aminoacyl-tRNA synthetase family. MshC subfamily. In terms of assembly, monomer. Zn(2+) is required as a cofactor.

It catalyses the reaction 1D-myo-inositol 2-amino-2-deoxy-alpha-D-glucopyranoside + L-cysteine + ATP = 1D-myo-inositol 2-(L-cysteinylamino)-2-deoxy-alpha-D-glucopyranoside + AMP + diphosphate + H(+). Functionally, catalyzes the ATP-dependent condensation of GlcN-Ins and L-cysteine to form L-Cys-GlcN-Ins. The polypeptide is L-cysteine:1D-myo-inositol 2-amino-2-deoxy-alpha-D-glucopyranoside ligase (Clavibacter sepedonicus (Clavibacter michiganensis subsp. sepedonicus)).